Here is an 83-residue protein sequence, read N- to C-terminus: Cytochrome c oxidase subunit 12, mitochondrial (83 aa).

Positions 24 to 67 (TKHCWQSYVDYHKCVNMKGEDFAPCKVFWKTYNALCPLDWIEKW) constitute a CHCH domain. Residues 27-37 (CWQSYVDYHKC) carry the Cx9C motif motif. 2 cysteine pairs are disulfide-bonded: Cys27–Cys59 and Cys37–Cys48. Residues 48 to 59 (CKVFWKTYNALC) carry the Cx10C motif motif. Ser82 bears the Phosphoserine mark.

The protein belongs to the cytochrome c oxidase subunit 6B family. As to quaternary structure, component of the cytochrome c oxidase (complex IV, CIV), a multisubunit enzyme composed of 12 subunits. The complex is composed of a catalytic core of 3 subunits COX1, COX2 and COX3, encoded in the mitochondrial DNA, and 9 supernumerary subunits COX4, COX5A (or COX5B), COX6, COX7, COX8, COX9, COX12, COX13 and COX26, which are encoded in the nuclear genome. The complex exists as a monomer or a dimer and forms supercomplexes (SCs) in the inner mitochondrial membrane with a dimer of ubiquinol-cytochrome c oxidoreductase (cytochrome b-c1 complex, complex III, CIII), resulting in 2 different assemblies (supercomplexes III(2)IV and III(2)IV(2)).

It is found in the mitochondrion inner membrane. It functions in the pathway energy metabolism; oxidative phosphorylation. In terms of biological role, component of the cytochrome c oxidase, the last enzyme in the mitochondrial electron transport chain which drives oxidative phosphorylation. The respiratory chain contains 3 multisubunit complexes succinate dehydrogenase (complex II, CII), ubiquinol-cytochrome c oxidoreductase (cytochrome b-c1 complex, complex III, CIII) and cytochrome c oxidase (complex IV, CIV), that cooperate to transfer electrons derived from NADH and succinate to molecular oxygen, creating an electrochemical gradient over the inner membrane that drives transmembrane transport and the ATP synthase. Cytochrome c oxidase is the component of the respiratory chain that catalyzes the reduction of oxygen to water. Electrons originating from reduced cytochrome c in the intermembrane space (IMS) are transferred via the dinuclear copper A center (CU(A)) of COX2 and heme A of COX1 to the active site in COX1, a binuclear center (BNC) formed by heme A3 and copper B (CU(B)). The BNC reduces molecular oxygen to 2 water molecules unsing 4 electrons from cytochrome c in the IMS and 4 protons from the mitochondrial matrix. This chain is Cytochrome c oxidase subunit 12, mitochondrial (COX12), found in Saccharomyces cerevisiae (strain ATCC 204508 / S288c) (Baker's yeast).